The chain runs to 515 residues: MSDQVIIFDTTLRDGEQALSASLTVKEKLQIAYALERLGVDVIEAGFPVSSPGDFESVRTIAQHIKNSRICGLSRAVAKDIDAAAEALKVAEAFRIHTFISTSTVHVQDKLRRSYDDVVEMGVKAVKHARKYTDDVEFSCEDAGRTPIDNLCRMVEAAINAGANTINIPDTVGYTVPGEFGGIVQTLFNRVPNIDKAIISVHCHDDLGMSVANSIAAVQAGARQVEGTINGIGERAGNCSLEEIAMILKTRSEYLGVHTNLKHDEIHRTSKLVSQLCNMPIQSNKAIVGANAFSHSSGIHQDGMLKNKNTYEIMTPESIGLKNQALNLTSRSGRAAVKSHMDEMGYKEDEYNLDTLYADFVKLADRKGQVFDYDLEALMHFANLRDEDDFYKLNYLSVQSGSVMATTSIKLLCGDEEKCEAAVGNGPVDALYQCIYKLTGYDIVLDKFDLTAKGEGEDGLGQADIIANYKGRKYHGTGLATDIIEASGQALLHVINSIHRADQIAEIKQKKVETV.

In terms of domain architecture, Pyruvate carboxyltransferase spans 5 to 267 (VIIFDTTLRD…HTNLKHDEIH (263 aa)). Mn(2+) is bound by residues Asp-14, His-202, His-204, and Asn-238. Residues 392-515 (KLNYLSVQSG…EIKQKKVETV (124 aa)) are regulatory domain.

Belongs to the alpha-IPM synthase/homocitrate synthase family. LeuA type 1 subfamily. As to quaternary structure, homodimer. It depends on Mn(2+) as a cofactor.

The protein resides in the cytoplasm. The catalysed reaction is 3-methyl-2-oxobutanoate + acetyl-CoA + H2O = (2S)-2-isopropylmalate + CoA + H(+). Its pathway is amino-acid biosynthesis; L-leucine biosynthesis; L-leucine from 3-methyl-2-oxobutanoate: step 1/4. Catalyzes the condensation of the acetyl group of acetyl-CoA with 3-methyl-2-oxobutanoate (2-ketoisovalerate) to form 3-carboxy-3-hydroxy-4-methylpentanoate (2-isopropylmalate). This chain is 2-isopropylmalate synthase, found in Aliivibrio fischeri (strain MJ11) (Vibrio fischeri).